A 382-amino-acid chain; its full sequence is UDP-4-amino-4-deoxy-L-arabinose--oxoglutarate aminotransferase (382 aa).

K183 is modified (N6-(pyridoxal phosphate)lysine).

It belongs to the DegT/DnrJ/EryC1 family. ArnB subfamily. In terms of assembly, homodimer. Requires pyridoxal 5'-phosphate as cofactor.

It carries out the reaction UDP-4-amino-4-deoxy-beta-L-arabinose + 2-oxoglutarate = UDP-beta-L-threo-pentopyranos-4-ulose + L-glutamate. Its pathway is nucleotide-sugar biosynthesis; UDP-4-deoxy-4-formamido-beta-L-arabinose biosynthesis; UDP-4-deoxy-4-formamido-beta-L-arabinose from UDP-alpha-D-glucuronate: step 2/3. It functions in the pathway bacterial outer membrane biogenesis; lipopolysaccharide biosynthesis. Functionally, catalyzes the conversion of UDP-4-keto-arabinose (UDP-Ara4O) to UDP-4-amino-4-deoxy-L-arabinose (UDP-L-Ara4N). The modified arabinose is attached to lipid A and is required for resistance to polymyxin and cationic antimicrobial peptides. The chain is UDP-4-amino-4-deoxy-L-arabinose--oxoglutarate aminotransferase from Pseudomonas aeruginosa (strain UCBPP-PA14).